The following is a 181-amino-acid chain: Protoporphyrinogen IX dehydrogenase [quinone] (181 aa).

Positions 3–172 constitute a Flavodoxin-like domain; it reads TLILFSTRDG…QVANFAREIA (170 aa). Residues 9-13 and 84-152 each bind FMN; these read TRDGQ and FYSV…ETDT.

Belongs to the HemG family. FMN is required as a cofactor.

The protein resides in the cell inner membrane. The catalysed reaction is protoporphyrinogen IX + 3 a menaquinone = protoporphyrin IX + 3 a menaquinol. It carries out the reaction protoporphyrinogen IX + 3 a ubiquinone = protoporphyrin IX + 3 a ubiquinol. The enzyme catalyses protoporphyrinogen IX + 3 a quinone = protoporphyrin IX + 3 a quinol. It functions in the pathway porphyrin-containing compound metabolism; protoporphyrin-IX biosynthesis; protoporphyrin-IX from protoporphyrinogen-IX: step 1/1. In terms of biological role, catalyzes the 6-electron oxidation of protoporphyrinogen IX to form protoporphyrin IX; under anaerobic conditions uses menaquinone as an electron acceptor, under aerobic condition uses ubiquinone as an electron acceptor. This chain is Protoporphyrinogen IX dehydrogenase [quinone], found in Escherichia coli O157:H7.